A 315-amino-acid polypeptide reads, in one-letter code: Indoleacetate decarboxylase activating enzyme (315 aa).

In terms of domain architecture, Radical SAM core spans histidine 21–lysine 311. The [4Fe-4S] cluster site is built by cysteine 35, cysteine 39, cysteine 42, cysteine 61, cysteine 64, cysteine 67, cysteine 71, cysteine 98, cysteine 101, cysteine 106, and cysteine 110. 4Fe-4S ferredoxin-type domains are found at residues proline 52–aspartate 81 and glycine 89–glutamate 120. Residues glycine 149, aspartate 198–lysine 200, and histidine 271 each bind S-adenosyl-L-methionine.

It belongs to the organic radical-activating enzymes family. It depends on [4Fe-4S] cluster as a cofactor.

It catalyses the reaction glycyl-[protein] + reduced [flavodoxin] + S-adenosyl-L-methionine = glycin-2-yl radical-[protein] + semiquinone [flavodoxin] + 5'-deoxyadenosine + L-methionine + H(+). In terms of biological role, catalyzes activation of the indoleacetate decarboxylase OsIAD under anaerobic conditions by generation of an organic free radical on a glycine residue, via a homolytic cleavage of S-adenosyl-L-methionine (SAM). This chain is Indoleacetate decarboxylase activating enzyme, found in Tractidigestivibacter scatoligenes (Olsenella scatoligenes).